The following is a 506-amino-acid chain: Adenylosuccinate synthetase (506 aa).

GTP contacts are provided by residues 35–41 and 63–65; these read GDEGKGK and GHT. Asp36 (proton acceptor) is an active-site residue. Asp36 and Gly63 together coordinate Mg(2+). Residues 36-39, 61-64, Thr212, Arg226, Asn304, Thr319, and Arg383 each bind IMP; these read DEGK and NAGH. Catalysis depends on His64, which acts as the Proton donor. Substrate is bound at residue 379-385; that stretch reads VTTKRKR. GTP is bound by residues Arg385, 411-413, and 494-496; these read KLD and GVG.

The protein belongs to the adenylosuccinate synthetase family. As to quaternary structure, homodimer. Mg(2+) serves as cofactor.

It is found in the cytoplasm. It catalyses the reaction IMP + L-aspartate + GTP = N(6)-(1,2-dicarboxyethyl)-AMP + GDP + phosphate + 2 H(+). The protein operates within purine metabolism; AMP biosynthesis via de novo pathway; AMP from IMP: step 1/2. Functionally, plays an important role in the de novo pathway and in the salvage pathway of purine nucleotide biosynthesis. Catalyzes the first committed step in the biosynthesis of AMP from IMP. The polypeptide is Adenylosuccinate synthetase (Drosophila yakuba (Fruit fly)).